A 1088-amino-acid polypeptide reads, in one-letter code: RNA-directed RNA polymerase (1088 aa).

The region spanning 501-687 is the RdRp catalytic domain; it reads LSYGDVTRFL…AKRYIAGGKI (187 aa).

It belongs to the reoviridae RNA-directed RNA polymerase family. Interacts with VP3 (Potential). Interacts with VP2; this interaction activates VP1. Interacts with NSP5; this interaction is probably necessary for the formation of functional virus factories. Interacts with NSP2; this interaction is weak. Mg(2+) is required as a cofactor.

It localises to the virion. The enzyme catalyses RNA(n) + a ribonucleoside 5'-triphosphate = RNA(n+1) + diphosphate. In terms of biological role, RNA-directed RNA polymerase that is involved in both transcription and genome replication. Together with VP3 capping enzyme, forms an enzyme complex positioned near the channels situated at each of the five-fold vertices of the core. Following infection, the outermost layer of the virus is lost, leaving a double-layered particle (DLP) made up of the core and VP6 shell. VP1 then catalyzes the transcription of fully conservative plus-strand genomic RNAs that are extruded through the DLP's channels into the cytoplasm where they function as mRNAs for translation of viral proteins. One copy of each of the viral (+)RNAs is also recruited during core assembly, together with newly synthesized polymerase complexes and VP2. The polymerase of these novo-formed particles catalyzes the synthesis of complementary minus-strands leading to dsRNA formation. To do so, the polymerase specifically recognizes and binds 4 bases 5'-UGUG-3' in the conserved 3'-sequence of plus-strand RNA templates. VP2 presumably activates the autoinhibited VP1-RNA complex to coordinate packaging and genome replication. Once dsRNA synthesis is complete, the polymerase switches to the transcriptional mode, thus providing secondary transcription. In Rotavirus A (strain RVA/SA11-Both/G3P5B[2]) (RV-A), this protein is RNA-directed RNA polymerase.